Here is an 89-residue protein sequence, read N- to C-terminus: Small ribosomal subunit protein uS15 (89 aa).

This sequence belongs to the universal ribosomal protein uS15 family. In terms of assembly, part of the 30S ribosomal subunit. Forms a bridge to the 50S subunit in the 70S ribosome, contacting the 23S rRNA.

Its function is as follows. One of the primary rRNA binding proteins, it binds directly to 16S rRNA where it helps nucleate assembly of the platform of the 30S subunit by binding and bridging several RNA helices of the 16S rRNA. In terms of biological role, forms an intersubunit bridge (bridge B4) with the 23S rRNA of the 50S subunit in the ribosome. This chain is Small ribosomal subunit protein uS15, found in Heliobacterium modesticaldum (strain ATCC 51547 / Ice1).